Reading from the N-terminus, the 278-residue chain is Large ribosomal subunit protein uL2 (278 aa).

2 disordered regions span residues 29-57 (PEKS…QGGG) and 224-278 (VAMN…NKKR). The segment covering 258–278 (RSPKKASNKYIVRRRKTNKKR) has biased composition (basic residues).

This sequence belongs to the universal ribosomal protein uL2 family. In terms of assembly, part of the 50S ribosomal subunit. Forms a bridge to the 30S subunit in the 70S ribosome.

Functionally, one of the primary rRNA binding proteins. Required for association of the 30S and 50S subunits to form the 70S ribosome, for tRNA binding and peptide bond formation. It has been suggested to have peptidyltransferase activity; this is somewhat controversial. Makes several contacts with the 16S rRNA in the 70S ribosome. In Streptomyces griseus subsp. griseus (strain JCM 4626 / CBS 651.72 / NBRC 13350 / KCC S-0626 / ISP 5235), this protein is Large ribosomal subunit protein uL2.